The chain runs to 67 residues: Beta-defensin 103A (67 aa).

An N-terminal signal peptide occupies residues 1–22 (MRIHYLLFTLLFLFLVPVPGHG). Cystine bridges form between Cys33–Cys62, Cys40–Cys55, and Cys45–Cys63.

The protein belongs to the beta-defensin family.

Its subcellular location is the secreted. In terms of biological role, exhibits antimicrobial activity against Gram-positive and Gram-negative bacteria. The chain is Beta-defensin 103A (DEFB103A) from Gorilla gorilla gorilla (Western lowland gorilla).